A 103-amino-acid polypeptide reads, in one-letter code: Large ribosomal subunit protein uL23 (103 aa).

It belongs to the universal ribosomal protein uL23 family. As to quaternary structure, part of the 50S ribosomal subunit. Contacts protein L29, and trigger factor when it is bound to the ribosome.

In terms of biological role, one of the early assembly proteins it binds 23S rRNA. One of the proteins that surrounds the polypeptide exit tunnel on the outside of the ribosome. Forms the main docking site for trigger factor binding to the ribosome. This chain is Large ribosomal subunit protein uL23, found in Chlorobium chlorochromatii (strain CaD3).